The primary structure comprises 361 residues: Peptide chain release factor 1 (361 aa).

N5-methylglutamine is present on Q235.

Belongs to the prokaryotic/mitochondrial release factor family. Methylated by PrmC. Methylation increases the termination efficiency of RF1.

Its subcellular location is the cytoplasm. Its function is as follows. Peptide chain release factor 1 directs the termination of translation in response to the peptide chain termination codons UAG and UAA. In Xanthomonas euvesicatoria pv. vesicatoria (strain 85-10) (Xanthomonas campestris pv. vesicatoria), this protein is Peptide chain release factor 1.